A 265-amino-acid chain; its full sequence is Inositol monophosphatase 2 (265 aa).

Residues Glu65, Asp86, Leu88, and Asp89 each coordinate Mg(2+). Glu65 contributes to the substrate binding site. Substrate contacts are provided by residues 88–91 (LDGT), 189–191 (GSC), Glu208, and Asp216. A Mg(2+)-binding site is contributed by Asp216.

Belongs to the inositol monophosphatase superfamily. It depends on Mg(2+) as a cofactor. As to expression, low expression in roots, stems, leaves, flowers and young and mature green fruits. Expressed in the stem/leaf junctions, below the shoot apex and on the abaxial side of the petiole of the first expanded leaflets.

The catalysed reaction is a myo-inositol phosphate + H2O = myo-inositol + phosphate. Its pathway is polyol metabolism; myo-inositol biosynthesis; myo-inositol from D-glucose 6-phosphate: step 2/2. Its function is as follows. Responsible for the provision of inositol required for synthesis of phosphatidylinositol and polyphosphoinositides. In Solanum lycopersicum (Tomato), this protein is Inositol monophosphatase 2 (IMP2).